The primary structure comprises 307 residues: G-protein coupled receptor 35 (307 aa).

Over 1–18 (MNSTTCNSTLTWPASVNN) the chain is Extracellular. N-linked (GlcNAc...) asparagine glycans are attached at residues Asn2 and Asn7. Residues 19-39 (FFIIYSALLLVLGLLLNSVAL) traverse the membrane as a helical segment. The Cytoplasmic portion of the chain corresponds to 40-53 (WVFCYRMHQWTETR). A helical transmembrane segment spans residues 54–74 (IYMTNLAVADLCLLCSLPFVL). Residues 75-88 (YSLKYSSSDTPVCQ) are Extracellular-facing. The cysteines at positions 87 and 160 are disulfide-linked. Residues 89 to 110 (LSQGIYLANRYMSISLVTAIAV) traverse the membrane as a helical segment. Residues 111–129 (DRYVAVRHPLRARELRSPR) lie on the Cytoplasmic side of the membrane. The chain crosses the membrane as a helical span at residues 130–150 (QAAAVCVALWVIVVTSLVVRW). Residues 151 to 176 (RLGMQEGGFCFSSQTRRNFSTTAFSL) are Extracellular-facing. The chain crosses the membrane as a helical span at residues 177-197 (LGFYLPLAIVVFCSLQVVTVL). Over 198 to 217 (SRRPAADVGQAEATQKATHM) the chain is Cytoplasmic. Residues 218–238 (VWANLAVFVICFLPLHVVLTV) traverse the membrane as a helical segment. Over 239–257 (QVSLNLNTCAARDTFSRAL) the chain is Extracellular. A helical transmembrane segment spans residues 258–278 (SITGKLSDTNCCLDAICYYYM). At 279-307 (AREFQEASKPATSSNTPHKSQDSQILSLT) the chain is on the cytoplasmic side. 4 positions are modified to phosphoserine: Ser286, Ser292, Ser298, and Ser301. Positions 288 to 307 (PATSSNTPHKSQDSQILSLT) are disordered.

Belongs to the G-protein coupled receptor 1 family. Multiply phosphorylated in clusters of serines and threonines in the C-terminal tail. Phosphorylation of Ser-298 and Ser-301 is mediated by GRK5 and/or GRK6. In terms of tissue distribution, predominantly expressed in immune and gastrointestinal tissues. Strongly GPR35 expressed in colonic macrophages.

It is found in the cell membrane. In terms of biological role, G-protein coupled receptor that binds to several ligands including the tryptophan metabolite kynurenic acid (KYNA), lysophosphatidic acid (LPA) or 5-hydroxyindoleacetic acid (5-HIAA) with high affinity, leading to rapid and transient activation of numerous intracellular signaling pathways. Plays a role in neutrophil recruitment to sites of inflammation and bacterial clearance through the major serotonin metabolite 5-HIAA that acts as a physiological ligand. Stimulates lipid metabolism, thermogenic, and anti-inflammatory gene expression in adipose tissue once activated by kynurenic acid. In macrophages, activation by lysophosphatidic acid promotes GPR35-induced signaling with a distinct transcriptional profile characterized by TNF production associated with ERK and NF-kappa-B activation. In turn, induces chemotaxis of macrophages. The polypeptide is G-protein coupled receptor 35 (Gpr35) (Mus musculus (Mouse)).